The sequence spans 428 residues: MHYLNISFTYKNTDISVREKLAFDSDEKKDQILRLLKSSKNIIECMVLSTCNRVEVLAYTNDIKSAMTHIIRCLTVYSGVFEDELFERADIYEDSGAVHHLFAVASSLDSLVVGETQIVGQLKNAFKFAFDNASSGEHISRLVHYACKCAARVRNETQISKNPISVSSVAVAKAKEIFGTLENKTAVVIGAGEMGELAAKHLITSGANVIIINRSSDHVEELVENLGDKASWDSILKLKEYINKYDLIFSSTSAPHAIITGELIEPQEFRRYFFDIAVPRDIDLVNTDKISVYSVDSLEEMVRRNLALREEQAQTAYSIVGQSTNEFLKFLKDNISIPLIKTIRKKAEICAEAELEKALKKGYLKHSDKEEAAKLIHQVFKAFLHSPTINLKSLASKNDAEQIAGGIKFLFDIKEENLENLTKDIDEI.

Substrate-binding positions include Thr50–Arg53, Ser110, Glu115–Gln117, and Gln121. The active-site Nucleophile is the Cys51. Gly190–Gly195 serves as a coordination point for NADP(+).

The protein belongs to the glutamyl-tRNA reductase family. Homodimer.

It carries out the reaction (S)-4-amino-5-oxopentanoate + tRNA(Glu) + NADP(+) = L-glutamyl-tRNA(Glu) + NADPH + H(+). Its pathway is porphyrin-containing compound metabolism; protoporphyrin-IX biosynthesis; 5-aminolevulinate from L-glutamyl-tRNA(Glu): step 1/2. Catalyzes the NADPH-dependent reduction of glutamyl-tRNA(Glu) to glutamate 1-semialdehyde (GSA). This is Glutamyl-tRNA reductase from Campylobacter curvus (strain 525.92).